We begin with the raw amino-acid sequence, 2376 residues long: Protein Ycf2 (2376 aa).

Disordered stretches follow at residues 173–194, 226–256, and 952–1011; these read SSQLKGSSDQSRDHFDSIGTED, TEIESDRFSKGLSGSSSKSRLFTEGEKEMNN, and KRKK…KRKE. Over residues 235-245 the composition is skewed to low complexity; sequence KGLSGSSSKSR. Basic and acidic residues-rich tracts occupy residues 246–255 and 960–1009; these read LFTEGEKEMN and KRKE…PEKR. 1441–1448 contacts ATP; that stretch reads GSIGSGRS. 3 disordered regions span residues 1515-1534, 1860-2046, and 2112-2230; these read YEDRDSDDYDEPGASDDYEP, LVGS…LRPK, and PAEE…DGFS. Positions 1866-2025 are enriched in acidic residues; it reads TEEEVEGTEE…GEGTEDEEGE (160 aa). The segment covering 2026-2038 has biased composition (basic and acidic residues); that stretch reads GTEKDSSQFDNDR. 2 stretches are compositionally biased toward acidic residues: residues 2112–2129 and 2136–2213; these read PAEEIPEEEDPLPEEALE and GEEE…ENDS.

The protein belongs to the Ycf2 family.

It localises to the plastid. The protein resides in the chloroplast stroma. In terms of biological role, probable ATPase of unknown function. Its presence in a non-photosynthetic plant (Epifagus virginiana) and experiments in tobacco indicate that it has an essential function which is probably not related to photosynthesis. This is Protein Ycf2 from Oenothera glazioviana (Large-flowered evening primrose).